The chain runs to 115 residues: Large ribosomal subunit protein bL19 (115 aa).

Belongs to the bacterial ribosomal protein bL19 family.

This protein is located at the 30S-50S ribosomal subunit interface and may play a role in the structure and function of the aminoacyl-tRNA binding site. This chain is Large ribosomal subunit protein bL19, found in Desulfovibrio desulfuricans (strain ATCC 27774 / DSM 6949 / MB).